Reading from the N-terminus, the 270-residue chain is MDRYAVIGHPVEHSKSPLIHAAFAQQTGQQLEYGKVQAPLDGFVAIVTDLQEKGYRGVNVTVPFKFEAYSLATELTPRARDAGAVNTLTFTDGAIHGDNTDGVGLVRDILQNLAFTLAGKRVLLLGAGGAAEGVLAPLLEASPLSLCIANRTVDKAEAMAARVRPGQTSLDARGFDALADQEFDVVINATSSGLHNERLPLPSGLFAADALAYDMMYGRETPFMRYAREEGASRIADGLGMLVEQAAEAFYIWRRVRPDTAPVMAALRAA.

Shikimate-binding positions include 14–16 (SKS) and threonine 61. Residue lysine 65 is the Proton acceptor of the active site. Positions 86 and 101 each coordinate shikimate. Residues 126–130 (GAGGA), 150–155 (NRTVDK), and methionine 215 contribute to the NADP(+) site. Tyrosine 217 contacts shikimate. Position 238 (glycine 238) interacts with NADP(+).

This sequence belongs to the shikimate dehydrogenase family. In terms of assembly, homodimer.

The catalysed reaction is shikimate + NADP(+) = 3-dehydroshikimate + NADPH + H(+). Its pathway is metabolic intermediate biosynthesis; chorismate biosynthesis; chorismate from D-erythrose 4-phosphate and phosphoenolpyruvate: step 4/7. Involved in the biosynthesis of the chorismate, which leads to the biosynthesis of aromatic amino acids. Catalyzes the reversible NADPH linked reduction of 3-dehydroshikimate (DHSA) to yield shikimate (SA). The chain is Shikimate dehydrogenase (NADP(+)) from Methylobacillus flagellatus (strain ATCC 51484 / DSM 6875 / VKM B-1610 / KT).